A 124-amino-acid chain; its full sequence is Holo-[acyl-carrier-protein] synthase (124 aa).

Mg(2+) contacts are provided by Asp7 and Glu55.

It belongs to the P-Pant transferase superfamily. AcpS family. Requires Mg(2+) as cofactor.

The protein localises to the cytoplasm. It catalyses the reaction apo-[ACP] + CoA = holo-[ACP] + adenosine 3',5'-bisphosphate + H(+). Transfers the 4'-phosphopantetheine moiety from coenzyme A to a Ser of acyl-carrier-protein. The chain is Holo-[acyl-carrier-protein] synthase from Borrelia garinii subsp. bavariensis (strain ATCC BAA-2496 / DSM 23469 / PBi) (Borreliella bavariensis).